We begin with the raw amino-acid sequence, 480 residues long: UDP-N-acetylmuramate--L-alanine ligase (480 aa).

127-133 is an ATP binding site; it reads GTHGKTT.

Belongs to the MurCDEF family.

The protein resides in the cytoplasm. The catalysed reaction is UDP-N-acetyl-alpha-D-muramate + L-alanine + ATP = UDP-N-acetyl-alpha-D-muramoyl-L-alanine + ADP + phosphate + H(+). It functions in the pathway cell wall biogenesis; peptidoglycan biosynthesis. Cell wall formation. The chain is UDP-N-acetylmuramate--L-alanine ligase from Blochmanniella floridana.